A 174-amino-acid polypeptide reads, in one-letter code: MTDIADVIRSLMREVPDFPEPGVHFKDLTPVLADARGLAEVSKAIADAARGADLVAGVDARGFLLGGAVAVTLGIGVLAVRKGGKLPPPVIGATYTLEYGTATLEVPAEGIELAGRSVVVIDDVLATGGTLAATHQLLTRAGANVTGAVVMMELAALGGRAALEPLEVTSLYTA.

The protein belongs to the purine/pyrimidine phosphoribosyltransferase family. In terms of assembly, homodimer.

It localises to the cytoplasm. The catalysed reaction is AMP + diphosphate = 5-phospho-alpha-D-ribose 1-diphosphate + adenine. It functions in the pathway purine metabolism; AMP biosynthesis via salvage pathway; AMP from adenine: step 1/1. Catalyzes a salvage reaction resulting in the formation of AMP, that is energically less costly than de novo synthesis. The sequence is that of Adenine phosphoribosyltransferase from Mycolicibacterium vanbaalenii (strain DSM 7251 / JCM 13017 / BCRC 16820 / KCTC 9966 / NRRL B-24157 / PYR-1) (Mycobacterium vanbaalenii).